The following is a 597-amino-acid chain: uncharacterized protein (597 aa).

The next 2 membrane-spanning stretches (helical) occupy residues 4-23 (LLLA…FKIV) and 209-231 (FVSV…GIAI).

It is found in the cell membrane. This is an uncharacterized protein from Archaeoglobus fulgidus (strain ATCC 49558 / DSM 4304 / JCM 9628 / NBRC 100126 / VC-16).